The following is a 105-amino-acid chain: Large ribosomal subunit protein eL30 (105 aa).

This sequence belongs to the eukaryotic ribosomal protein eL30 family.

This chain is Large ribosomal subunit protein eL30 (RPL30), found in Candida glabrata (strain ATCC 2001 / BCRC 20586 / JCM 3761 / NBRC 0622 / NRRL Y-65 / CBS 138) (Yeast).